Consider the following 209-residue polypeptide: Ribosomal RNA large subunit methyltransferase E (209 aa).

5 residues coordinate S-adenosyl-L-methionine: glycine 63, tryptophan 65, aspartate 83, aspartate 99, and aspartate 124. Lysine 164 (proton acceptor) is an active-site residue.

It belongs to the class I-like SAM-binding methyltransferase superfamily. RNA methyltransferase RlmE family.

The protein localises to the cytoplasm. It carries out the reaction uridine(2552) in 23S rRNA + S-adenosyl-L-methionine = 2'-O-methyluridine(2552) in 23S rRNA + S-adenosyl-L-homocysteine + H(+). Functionally, specifically methylates the uridine in position 2552 of 23S rRNA at the 2'-O position of the ribose in the fully assembled 50S ribosomal subunit. This Shewanella loihica (strain ATCC BAA-1088 / PV-4) protein is Ribosomal RNA large subunit methyltransferase E.